Reading from the N-terminus, the 565-residue chain is Estrogen receptor gamma (565 aa).

The tract at residues 1–168 is modulating; sequence MAVASSPEKD…TSGGKTDLHY (168 aa). 2 consecutive NR C4-type zinc fingers follow at residues 169-189 and 205-229; these read CAVCHDYASGYHYGVWSCEGC and CPATNECTIDKNRRKSCQACRLRKC. Positions 169-234 form a DNA-binding region, nuclear receptor; that stretch reads CAVCHDYASG…RLRKCYEVGM (66 aa). Residues 235-285 form a hinge region; sequence TKCGMRKERGNYRSPQMRRMTRLTSQGRTDSSSVLTGSAVVSLNAPQPSAL. An NR LBD domain is found at 286 to 516; it reads TSEQLIERLM…DLLLEMLDAH (231 aa). The tract at residues 522-565 is disordered; sequence RLPRRSPEQEPEDQADAPAPPHSSGSGPSYTWTPSSSEGAGEPQ.

Belongs to the nuclear hormone receptor family. NR3 subfamily. In terms of assembly, homodimer. In terms of tissue distribution, abundant in the ovary and testes, barely detectable in the brain and muscle and undetectable in the liver.

It localises to the nucleus. In terms of biological role, the steroid hormones and their receptors are involved in the regulation of eukaryotic gene expression and affect cellular proliferation and differentiation in target tissues. This chain is Estrogen receptor gamma (esr3), found in Micropogonias undulatus (Atlantic croaker).